A 107-amino-acid polypeptide reads, in one-letter code: Translation initiation factor IF-1, chloroplastic (107 aa).

Residues 8 to 83 (REKKNPREAK…SKGRIIYRLP (76 aa)) form the S1-like domain.

It belongs to the IF-1 family. Component of the 30S ribosomal translation pre-initiation complex which assembles on the 30S ribosome in the order IF-2 and IF-3, IF-1 and N-formylmethionyl-tRNA(fMet); mRNA recruitment can occur at any time during PIC assembly.

It is found in the plastid. The protein localises to the chloroplast. One of the essential components for the initiation of protein synthesis. Stabilizes the binding of IF-2 and IF-3 on the 30S subunit to which N-formylmethionyl-tRNA(fMet) subsequently binds. Helps modulate mRNA selection, yielding the 30S pre-initiation complex (PIC). Upon addition of the 50S ribosomal subunit IF-1, IF-2 and IF-3 are released leaving the mature 70S translation initiation complex. This chain is Translation initiation factor IF-1, chloroplastic, found in Lolium perenne (Perennial ryegrass).